A 411-amino-acid polypeptide reads, in one-letter code: Acetylornithine aminotransferase, mitochondrial (411 aa).

An N6-(pyridoxal phosphate)lysine modification is found at lysine 262.

It belongs to the class-III pyridoxal-phosphate-dependent aminotransferase family. Requires pyridoxal 5'-phosphate as cofactor.

It localises to the mitochondrion matrix. The catalysed reaction is N(2)-acetyl-L-ornithine + 2-oxoglutarate = N-acetyl-L-glutamate 5-semialdehyde + L-glutamate. The protein operates within amino-acid biosynthesis; L-arginine biosynthesis; N(2)-acetyl-L-ornithine from L-glutamate: step 4/4. This is Acetylornithine aminotransferase, mitochondrial (ARG8) from Yarrowia lipolytica (strain CLIB 122 / E 150) (Yeast).